A 41-amino-acid chain; its full sequence is Large ribosomal subunit protein bL36 (41 aa).

The protein belongs to the bacterial ribosomal protein bL36 family.

The sequence is that of Large ribosomal subunit protein bL36 from Methylobacterium nodulans (strain LMG 21967 / CNCM I-2342 / ORS 2060).